The following is a 454-amino-acid chain: Bifunctional protein GlmU (454 aa).

Residues methionine 1 to arginine 233 are pyrophosphorylase. Residues leucine 13–glycine 16, lysine 27, glutamine 80, glycine 85–threonine 86, tyrosine 108–aspartate 110, glycine 145, glutamate 159, asparagine 174, and asparagine 231 each bind UDP-N-acetyl-alpha-D-glucosamine. Aspartate 110 serves as a coordination point for Mg(2+). Residue asparagine 231 participates in Mg(2+) binding. Residues alanine 234–alanine 254 form a linker region. The tract at residues glycine 255–aspartate 454 is N-acetyltransferase. Positions 320 and 338 each coordinate UDP-N-acetyl-alpha-D-glucosamine. The Proton acceptor role is filled by histidine 350. Tyrosine 353 and asparagine 364 together coordinate UDP-N-acetyl-alpha-D-glucosamine. Acetyl-CoA-binding positions include alanine 367, asparagine 373–tyrosine 374, serine 392, serine 410, and arginine 427.

In the N-terminal section; belongs to the N-acetylglucosamine-1-phosphate uridyltransferase family. The protein in the C-terminal section; belongs to the transferase hexapeptide repeat family. As to quaternary structure, homotrimer. Requires Mg(2+) as cofactor.

It localises to the cytoplasm. It catalyses the reaction alpha-D-glucosamine 1-phosphate + acetyl-CoA = N-acetyl-alpha-D-glucosamine 1-phosphate + CoA + H(+). It carries out the reaction N-acetyl-alpha-D-glucosamine 1-phosphate + UTP + H(+) = UDP-N-acetyl-alpha-D-glucosamine + diphosphate. It participates in nucleotide-sugar biosynthesis; UDP-N-acetyl-alpha-D-glucosamine biosynthesis; N-acetyl-alpha-D-glucosamine 1-phosphate from alpha-D-glucosamine 6-phosphate (route II): step 2/2. The protein operates within nucleotide-sugar biosynthesis; UDP-N-acetyl-alpha-D-glucosamine biosynthesis; UDP-N-acetyl-alpha-D-glucosamine from N-acetyl-alpha-D-glucosamine 1-phosphate: step 1/1. It functions in the pathway bacterial outer membrane biogenesis; LPS lipid A biosynthesis. In terms of biological role, catalyzes the last two sequential reactions in the de novo biosynthetic pathway for UDP-N-acetylglucosamine (UDP-GlcNAc). The C-terminal domain catalyzes the transfer of acetyl group from acetyl coenzyme A to glucosamine-1-phosphate (GlcN-1-P) to produce N-acetylglucosamine-1-phosphate (GlcNAc-1-P), which is converted into UDP-GlcNAc by the transfer of uridine 5-monophosphate (from uridine 5-triphosphate), a reaction catalyzed by the N-terminal domain. This is Bifunctional protein GlmU from Jannaschia sp. (strain CCS1).